A 293-amino-acid polypeptide reads, in one-letter code: ATP synthase gamma chain (293 aa).

The protein belongs to the ATPase gamma chain family. F-type ATPases have 2 components, CF(1) - the catalytic core - and CF(0) - the membrane proton channel. CF(1) has five subunits: alpha(3), beta(3), gamma(1), delta(1), epsilon(1). CF(0) has three main subunits: a, b and c.

It is found in the cell inner membrane. Its function is as follows. Produces ATP from ADP in the presence of a proton gradient across the membrane. The gamma chain is believed to be important in regulating ATPase activity and the flow of protons through the CF(0) complex. This is ATP synthase gamma chain from Leptothrix cholodnii (strain ATCC 51168 / LMG 8142 / SP-6) (Leptothrix discophora (strain SP-6)).